Consider the following 314-residue polypeptide: MLEVFFLGTGGIMPTRERNVPAIALRYKGEIILFDAGEGTIRQMNTAKLSPMKVDKIFITHFHGDHYLGIPALIQTMNLWDRQKPLHIYGPKYTFQFVQNLLNSGFFRPGFDIHVHELGETRLKFGDYEIWSFKVEHGIPALGYVFKEKDRRGKFLKEKLREYGLEEGPILGKLEREGKIEWNGRIIRLEDVTGPRRKGLKIVYTGDTEPCERVKLFSERADLLIHEATYLNPGDRGDSYHSTVEEACDTARRAKVKLLALFHRAFRYSYEDYVEEALKICESLGVRAVVPRDFDVITFKSGTWELRNLLEERE.

The Zn(2+) site is built by His61, His63, Asp65, His66, His137, Asp207, and His263. The active-site Proton acceptor is the Asp65.

It belongs to the RNase Z family. Homodimer. Zn(2+) is required as a cofactor.

The enzyme catalyses Endonucleolytic cleavage of RNA, removing extra 3' nucleotides from tRNA precursor, generating 3' termini of tRNAs. A 3'-hydroxy group is left at the tRNA terminus and a 5'-phosphoryl group is left at the trailer molecule.. Its function is as follows. Zinc phosphodiesterase, which displays some tRNA 3'-processing endonuclease activity. Probably involved in tRNA maturation, by removing a 3'-trailer from precursor tRNA. In Thermococcus kodakarensis (strain ATCC BAA-918 / JCM 12380 / KOD1) (Pyrococcus kodakaraensis (strain KOD1)), this protein is Ribonuclease Z.